The primary structure comprises 195 residues: Imidazoleglycerol-phosphate dehydratase (195 aa).

It belongs to the imidazoleglycerol-phosphate dehydratase family.

Its subcellular location is the cytoplasm. It carries out the reaction D-erythro-1-(imidazol-4-yl)glycerol 3-phosphate = 3-(imidazol-4-yl)-2-oxopropyl phosphate + H2O. Its pathway is amino-acid biosynthesis; L-histidine biosynthesis; L-histidine from 5-phospho-alpha-D-ribose 1-diphosphate: step 6/9. The polypeptide is Imidazoleglycerol-phosphate dehydratase (Clostridium botulinum (strain Alaska E43 / Type E3)).